We begin with the raw amino-acid sequence, 510 residues long: Histidine ammonia-lyase (510 aa).

The 5-imidazolinone (Ala-Gly) cross-link spans 145–147; that stretch reads ASG. 2,3-didehydroalanine (Ser) is present on Ser146.

It belongs to the PAL/histidase family. Contains an active site 4-methylidene-imidazol-5-one (MIO), which is formed autocatalytically by cyclization and dehydration of residues Ala-Ser-Gly.

The protein localises to the cytoplasm. It carries out the reaction L-histidine = trans-urocanate + NH4(+). It participates in amino-acid degradation; L-histidine degradation into L-glutamate; N-formimidoyl-L-glutamate from L-histidine: step 1/3. The polypeptide is Histidine ammonia-lyase (Stigmatella aurantiaca).